A 464-amino-acid chain; its full sequence is Mitogen-activated protein kinase 10 (464 aa).

The 296-residue stretch at 64–359 (YQNLKPIGSG…VDDALQHPYI (296 aa)) folds into the Protein kinase domain. Residues 70–78 (IGSGAQGIV) and lysine 93 each bind ATP. Aspartate 189 functions as the Proton acceptor in the catalytic mechanism. A Phosphothreonine; by MAP2K7 modification is found at threonine 221. Residues 221-223 (TPY) carry the TXY motif. Position 223 is a phosphotyrosine; by MAP2K4 (tyrosine 223). Positions 405–464 (TKNGVVKGQPSPSGAAVNSSESLPPSSSVNDISSMSTDQTLASDTDSSLEASAGPLGCCR) are disordered. A compositionally biased stretch (low complexity) spans 423–432 (SSESLPPSSS). Positions 433-454 (VNDISSMSTDQTLASDTDSSLE) are enriched in polar residues. S-palmitoyl cysteine attachment occurs at residues cysteine 462 and cysteine 463.

The protein belongs to the protein kinase superfamily. CMGC Ser/Thr protein kinase family. MAP kinase subfamily. In terms of assembly, interacts with MAPKBP1. Interacts with MAPK8IP1/JIP-1 and MAPK8IP3/JIP-3/JSAP1. Interacts with SPAG9/MAPK8IP4/JIP4. Interacts with HDAC9. Interacts with ARRB2; the interaction enhances MAPK10 activation by MAP3K5. Interacts with SARM1. Interacts with JUND; interaction is inhibited in the presence of MEN1. Mg(2+) is required as a cofactor. In terms of processing, dually phosphorylated on Thr-221 and Tyr-223 by MAP2K4 and MAP2K7, which activates the enzyme. MAP2K7 shows a strong preference for Thr-221 while MAP2K4 phosphorylates Tyr-223 preferentially. Weakly autophosphorylated on threonine and tyrosine residues in vitro. Palmitoylation regulates subcellular location and axonal development. As to expression, specific to a subset of neurons in the nervous system. Present in the hippocampus and areas, cerebellum, striatum, brain stem, and weakly in the spinal cord. Very weak expression in testis and kidney.

The protein resides in the cytoplasm. It localises to the membrane. Its subcellular location is the nucleus. It is found in the mitochondrion. The enzyme catalyses L-seryl-[protein] + ATP = O-phospho-L-seryl-[protein] + ADP + H(+). The catalysed reaction is L-threonyl-[protein] + ATP = O-phospho-L-threonyl-[protein] + ADP + H(+). Its activity is regulated as follows. Activated by threonine and tyrosine phosphorylation by two dual specificity kinases, MAP2K4 and MAP2K7. MAP2K7 phosphorylates MAPK10 on Thr-221 causing a conformational change and a large increase in Vmax. MAP2K4 then phosphorylates Tyr-223 resulting in a further increase in Vmax. Inhibited by dual specificity phosphatases, such as DUSP1. Inhibited by HDAC9. In terms of biological role, serine/threonine-protein kinase involved in various processes such as neuronal proliferation, differentiation, migration and programmed cell death. Extracellular stimuli such as pro-inflammatory cytokines or physical stress stimulate the stress-activated protein kinase/c-Jun N-terminal kinase (SAP/JNK) signaling pathway. In this cascade, two dual specificity kinases MAP2K4/MKK4 and MAP2K7/MKK7 phosphorylate and activate MAPK10/JNK3. In turn, MAPK10/JNK3 phosphorylates a number of transcription factors, primarily components of AP-1 such as JUN and ATF2 and thus regulates AP-1 transcriptional activity. Plays regulatory roles in the signaling pathways during neuronal apoptosis. Phosphorylates the neuronal microtubule regulator STMN2. Acts in the regulation of the amyloid-beta precursor protein/APP signaling during neuronal differentiation by phosphorylating APP. Also participates in neurite growth in spiral ganglion neurons. Phosphorylates the CLOCK-BMAL1 heterodimer and plays a role in the photic regulation of the circadian clock. Phosphorylates JUND and this phosphorylation is inhibited in the presence of MEN1. The protein is Mitogen-activated protein kinase 10 (MAPK10) of Homo sapiens (Human).